A 22-amino-acid polypeptide reads, in one-letter code: Unknown protein 10 (22 aa).

The polypeptide is Unknown protein 10 (Pseudotsuga menziesii (Douglas-fir)).